The primary structure comprises 466 residues: 3-isopropylmalate dehydratase large subunit (466 aa).

[4Fe-4S] cluster contacts are provided by Cys-347, Cys-407, and Cys-410.

It belongs to the aconitase/IPM isomerase family. LeuC type 1 subfamily. Heterodimer of LeuC and LeuD. [4Fe-4S] cluster is required as a cofactor.

It catalyses the reaction (2R,3S)-3-isopropylmalate = (2S)-2-isopropylmalate. It participates in amino-acid biosynthesis; L-leucine biosynthesis; L-leucine from 3-methyl-2-oxobutanoate: step 2/4. Catalyzes the isomerization between 2-isopropylmalate and 3-isopropylmalate, via the formation of 2-isopropylmaleate. This is 3-isopropylmalate dehydratase large subunit from Pseudoalteromonas translucida (strain TAC 125).